The following is a 396-amino-acid chain: Elongation factor Tu 1 (396 aa).

A tr-type G domain is found at 10–206; that stretch reads KLHVNVGTIG…ALDTFIPDPT (197 aa). The segment at 19–26 is G1; it reads GHVDHGKT. 19-26 is a GTP binding site; sequence GHVDHGKT. Position 26 (Thr26) interacts with Mg(2+). Residues 60-64 form a G2 region; that stretch reads GITIS. The segment at 81–84 is G3; sequence DCPG. GTP-binding positions include 81 to 85 and 136 to 139; these read DCPGH and NKAD. Positions 136–139 are G4; sequence NKAD. The tract at residues 174–176 is G5; that stretch reads SAR.

Belongs to the TRAFAC class translation factor GTPase superfamily. Classic translation factor GTPase family. EF-Tu/EF-1A subfamily. In terms of assembly, monomer.

It localises to the cytoplasm. It catalyses the reaction GTP + H2O = GDP + phosphate + H(+). Functionally, GTP hydrolase that promotes the GTP-dependent binding of aminoacyl-tRNA to the A-site of ribosomes during protein biosynthesis. This Xanthomonas campestris pv. campestris (strain B100) protein is Elongation factor Tu 1.